The chain runs to 191 residues: Phospholipase A2-delta (191 aa).

Residues 1-25 (MIRGGALTHVALGLTVFLLLAVVHS) form the signal peptide. Disulfide bonds link cysteine 29–cysteine 56, cysteine 33–cysteine 62, cysteine 38–cysteine 115, cysteine 49–cysteine 69, cysteine 68–cysteine 93, and cysteine 75–cysteine 86. Ca(2+)-binding residues include tyrosine 48, glycine 50, and tyrosine 53. Histidine 72 is a catalytic residue. Aspartate 73 is a binding site for Ca(2+). Residues 161–191 (KADTKDGLGTNQGPQTKDGSKVSVPMNPSPS) form a disordered region.

Belongs to the phospholipase A2 family. It depends on Ca(2+) as a cofactor. As to expression, specifically expressed in flowers but at a low level. Detected specifically in the pollen.

It is found in the secreted. Its subcellular location is the endoplasmic reticulum. It carries out the reaction a 1,2-diacyl-sn-glycero-3-phosphocholine + H2O = a 1-acyl-sn-glycero-3-phosphocholine + a fatty acid + H(+). Its function is as follows. PA2 catalyzes the calcium-dependent hydrolysis of the 2-acyl groups in 3-sn-phosphoglycerides. Releases lysophospholipids (LPLs) and free fatty acids (FFAs) from membrane phospholipids in response to hormones and other external stimuli. Plays a role in pollen development and germination and tube growth. The sequence is that of Phospholipase A2-delta (PLA2-DELTA) from Arabidopsis thaliana (Mouse-ear cress).